The sequence spans 440 residues: Enolase (440 aa).

Gln-163 provides a ligand contact to (2R)-2-phosphoglycerate. Glu-205 (proton donor) is an active-site residue. Positions 242, 288, and 315 each coordinate Mg(2+). (2R)-2-phosphoglycerate is bound by residues Lys-340, Arg-369, Ser-370, and Lys-391. Residue Lys-340 is the Proton acceptor of the active site.

The protein belongs to the enolase family. It depends on Mg(2+) as a cofactor.

The protein resides in the cytoplasm. It is found in the secreted. Its subcellular location is the cell surface. It catalyses the reaction (2R)-2-phosphoglycerate = phosphoenolpyruvate + H2O. It functions in the pathway carbohydrate degradation; glycolysis; pyruvate from D-glyceraldehyde 3-phosphate: step 4/5. Functionally, catalyzes the reversible conversion of 2-phosphoglycerate (2-PG) into phosphoenolpyruvate (PEP). It is essential for the degradation of carbohydrates via glycolysis. This is Enolase from Limosilactobacillus fermentum (strain NBRC 3956 / LMG 18251) (Lactobacillus fermentum).